The chain runs to 188 residues: NADH-quinone oxidoreductase subunit I (188 aa).

2 consecutive 4Fe-4S ferredoxin-type domains span residues 44-74 (LNRYADGLEKCIGCELCAWACPADAIYVEGA) and 90-119 (QVYQINYLRCIGCGLCIEACPTRALTMTNE). 8 residues coordinate [4Fe-4S] cluster: Cys-54, Cys-57, Cys-60, Cys-64, Cys-99, Cys-102, Cys-105, and Cys-109. A disordered region spans residues 167–188 (TGGAAAAAQDESEVDDTAGDRP). Residues 176–188 (DESEVDDTAGDRP) are compositionally biased toward acidic residues.

It belongs to the complex I 23 kDa subunit family. NDH-1 is composed of 14 different subunits. Subunits NuoA, H, J, K, L, M, N constitute the membrane sector of the complex. [4Fe-4S] cluster is required as a cofactor.

The protein resides in the cell membrane. The catalysed reaction is a quinone + NADH + 5 H(+)(in) = a quinol + NAD(+) + 4 H(+)(out). NDH-1 shuttles electrons from NADH, via FMN and iron-sulfur (Fe-S) centers, to quinones in the respiratory chain. The immediate electron acceptor for the enzyme in this species is believed to be ubiquinone. Couples the redox reaction to proton translocation (for every two electrons transferred, four hydrogen ions are translocated across the cytoplasmic membrane), and thus conserves the redox energy in a proton gradient. This Rhodococcus jostii (strain RHA1) protein is NADH-quinone oxidoreductase subunit I.